A 310-amino-acid polypeptide reads, in one-letter code: Methionyl-tRNA formyltransferase (310 aa).

109–112 (SLLP) lines the (6S)-5,6,7,8-tetrahydrofolate pocket.

The protein belongs to the Fmt family.

It catalyses the reaction L-methionyl-tRNA(fMet) + (6R)-10-formyltetrahydrofolate = N-formyl-L-methionyl-tRNA(fMet) + (6S)-5,6,7,8-tetrahydrofolate + H(+). Its function is as follows. Attaches a formyl group to the free amino group of methionyl-tRNA(fMet). The formyl group appears to play a dual role in the initiator identity of N-formylmethionyl-tRNA by promoting its recognition by IF2 and preventing the misappropriation of this tRNA by the elongation apparatus. The protein is Methionyl-tRNA formyltransferase of Chloroflexus aurantiacus (strain ATCC 29366 / DSM 635 / J-10-fl).